We begin with the raw amino-acid sequence, 547 residues long: Delta-guaiene synthase 3 (547 aa).

Residues aspartate 299, aspartate 303, and aspartate 444 each contribute to the Mg(2+) site. Positions 299 to 303 (DDTYD) match the DDXXD motif motif.

This sequence belongs to the terpene synthase family. The cofactor is Mg(2+).

The catalysed reaction is (2E,6E)-farnesyl diphosphate = delta-guaiene + diphosphate. It carries out the reaction (2E,6E)-farnesyl diphosphate = alpha-guaiene + diphosphate. The protein operates within secondary metabolite biosynthesis; terpenoid biosynthesis. In terms of biological role, sesquiterpene synthase involved in the biosynthesis of delta-guaiene (78.2%) and alpha-guaiene (20.9%), two structures composed of five- and seven-membered rings. Also produces 0.9% of alpha-humulene. This chain is Delta-guaiene synthase 3 (C4), found in Aquilaria crassna (Eagle wood).